Consider the following 1257-residue polypeptide: Neural cell adhesion molecule L1 (1257 aa).

A signal peptide spans 1–19; it reads MVVALRYVWPLLLCSPCLL. Residues 20–1120 lie on the Extracellular side of the membrane; that stretch reads IQIPEEYEGH…RLPPAGFATE (1101 aa). 6 consecutive Ig-like C2-type domains span residues 35 to 125, 139 to 226, 240 to 328, 333 to 420, 425 to 507, and 518 to 607; these read PVIT…TAMS, PKET…EPID, PRLL…YYVT, PYWL…AYIY, PAKI…NNVT, and TQIT…AQLL. Intrachain disulfides connect Cys-57/Cys-114 and Cys-158/Cys-209. Residues Asn-100, Asn-203, Asn-247, and Asn-294 are each glycosylated (N-linked (GlcNAc...) asparagine). Disulfide bonds link Cys-264–Cys-312 and Cys-354–Cys-404. N-linked (GlcNAc...) asparagine glycans are attached at residues Asn-433, Asn-479, Asn-490, and Asn-505. A disulfide bridge connects residues Cys-448 and Cys-497. A disulfide bridge links Cys-539 with Cys-591. The Cell attachment site signature appears at 554-556; it reads RGD. Asn-588 and Asn-671 each carry an N-linked (GlcNAc...) asparagine glycan. Fibronectin type-III domains are found at residues 615-712, 717-810, 814-916, 920-1015, and 1016-1115; these read VPRL…TPEA, NPVD…SGED, AIPE…TPEG, HPEA…MALS, and GISD…LPPA. A disordered region spans residues 698-725; sequence GEPSPVSETVVTPEAAPEKNPVDVKGEG. Residues 713 to 725 are compositionally biased toward basic and acidic residues; that stretch reads APEKNPVDVKGEG. Residues Asn-726, Asn-777, Asn-825, Asn-849, Asn-876, Asn-979, Asn-1022, Asn-1030, Asn-1071, and Asn-1105 are each glycosylated (N-linked (GlcNAc...) asparagine). A helical transmembrane segment spans residues 1121-1143; the sequence is GWFIGFVSAIILLLLVLLILCFI. Topologically, residues 1144–1257 are cytoplasmic; that stretch reads KRSKGGKYSV…SPINPAVALE (114 aa). Ser-1163, Thr-1172, Arg-1177, and Ser-1178 each carry phosphoserine. The span at 1176–1187 shows a compositional bias: basic and acidic residues; sequence YRSLESDNEEKA. Disordered stretches follow at residues 1176–1207 and 1226–1257; these read YRSL…SDDS and IGQY…VALE. Ser-1181 is subject to Phosphoserine; by CaMK2. Phosphoserine occurs at positions 1194, 1243, 1244, and 1248. Over residues 1241-1250 the composition is skewed to polar residues; that stretch reads NDSSGATSPI.

The protein belongs to the immunoglobulin superfamily. L1/neurofascin/NgCAM family. In terms of assembly, interacts with SHTN1; the interaction occurs in axonal growth cones. Interacts with isoform 2 of BSG.

It is found in the cell membrane. Its subcellular location is the cell projection. The protein resides in the growth cone. It localises to the axon. The protein localises to the dendrite. Its function is as follows. Neural cell adhesion molecule involved in the dynamics of cell adhesion and in the generation of transmembrane signals at tyrosine kinase receptors. During brain development, critical in multiple processes, including neuronal migration, axonal growth and fasciculation, and synaptogenesis. In the mature brain, plays a role in the dynamics of neuronal structure and function, including synaptic plasticity. In Homo sapiens (Human), this protein is Neural cell adhesion molecule L1 (L1CAM).